A 140-amino-acid polypeptide reads, in one-letter code: Hemoglobin subunit alpha-D (140 aa).

Residues 1-140 (MLTDSDKKLV…VCTVLAEKYR (140 aa)) enclose the Globin domain. Residues H57 and H86 each contribute to the heme b site.

It belongs to the globin family. As to quaternary structure, heterotetramer of two alpha-D chains and two beta chains. Red blood cells.

Functionally, involved in oxygen transport from the lung to the various peripheral tissues. In Columba livia (Rock dove), this protein is Hemoglobin subunit alpha-D (HBAD).